A 408-amino-acid polypeptide reads, in one-letter code: Putative UPF0496 protein 2 (408 aa).

The next 2 membrane-spanning stretches (helical) occupy residues 224-244 and 252-272; these read RIAR…AIVA and ALVG…GAAR. Positions 385-408 are disordered; it reads MARGLPPPSPATVTTTSEERLTSS.

Belongs to the UPF0496 family.

The protein localises to the membrane. This chain is Putative UPF0496 protein 2, found in Oryza sativa subsp. indica (Rice).